The sequence spans 296 residues: GTPase Era (296 aa).

An Era-type G domain is found at 3–170; it reads KSGFVTIIGR…IELMVKHLNE (168 aa). Residues 11-18 form a G1 region; the sequence is GRPNVGKS. 11 to 18 serves as a coordination point for GTP; that stretch reads GRPNVGKS. The tract at residues 37–41 is G2; it reads QTTRN. Residues 58–61 form a G3 region; that stretch reads DTPG. GTP is bound by residues 58 to 62 and 120 to 123; these read DTPGM and NKID. A G4 region spans residues 120 to 123; that stretch reads NKID. The G5 stretch occupies residues 149 to 151; sequence ISA. The 77-residue stretch at 201-277 folds into the KH type-2 domain; the sequence is LSQEVPHGIA…NMKIWVKVKK (77 aa).

It belongs to the TRAFAC class TrmE-Era-EngA-EngB-Septin-like GTPase superfamily. Era GTPase family. In terms of assembly, monomer.

It is found in the cytoplasm. The protein localises to the cell membrane. Functionally, an essential GTPase that binds both GDP and GTP, with rapid nucleotide exchange. Plays a role in 16S rRNA processing and 30S ribosomal subunit biogenesis and possibly also in cell cycle regulation and energy metabolism. This is GTPase Era from Clostridium acetobutylicum (strain ATCC 824 / DSM 792 / JCM 1419 / IAM 19013 / LMG 5710 / NBRC 13948 / NRRL B-527 / VKM B-1787 / 2291 / W).